A 342-amino-acid chain; its full sequence is N-acetyl-gamma-glutamyl-phosphate reductase (342 aa).

Cys-149 is an active-site residue.

Belongs to the NAGSA dehydrogenase family. Type 1 subfamily.

The protein resides in the cytoplasm. The catalysed reaction is N-acetyl-L-glutamate 5-semialdehyde + phosphate + NADP(+) = N-acetyl-L-glutamyl 5-phosphate + NADPH + H(+). It functions in the pathway amino-acid biosynthesis; L-arginine biosynthesis; N(2)-acetyl-L-ornithine from L-glutamate: step 3/4. Its function is as follows. Catalyzes the NADPH-dependent reduction of N-acetyl-5-glutamyl phosphate to yield N-acetyl-L-glutamate 5-semialdehyde. In Cereibacter sphaeroides (strain KD131 / KCTC 12085) (Rhodobacter sphaeroides), this protein is N-acetyl-gamma-glutamyl-phosphate reductase.